A 260-amino-acid polypeptide reads, in one-letter code: uncharacterized protein (260 aa).

The N-terminal stretch at 1-22 (MKHSKKLLLCISFLLITIFISG) is a signal peptide. A lipid anchor (N-palmitoyl cysteine) is attached at Cys-23. Cys-23 is lipidated: S-diacylglycerol cysteine.

It belongs to the staphylococcal tandem lipoprotein family.

Its subcellular location is the cell membrane. This is an uncharacterized protein from Staphylococcus epidermidis (strain ATCC 35984 / DSM 28319 / BCRC 17069 / CCUG 31568 / BM 3577 / RP62A).